A 427-amino-acid polypeptide reads, in one-letter code: Trigger factor (427 aa).

One can recognise a PPIase FKBP-type domain in the interval 163–248; it reads GDVVNLDFDG…INEVKSKEVP (86 aa).

This sequence belongs to the FKBP-type PPIase family. Tig subfamily.

It localises to the cytoplasm. The catalysed reaction is [protein]-peptidylproline (omega=180) = [protein]-peptidylproline (omega=0). Functionally, involved in protein export. Acts as a chaperone by maintaining the newly synthesized protein in an open conformation. Functions as a peptidyl-prolyl cis-trans isomerase. This chain is Trigger factor, found in Macrococcus caseolyticus (strain JCSC5402) (Macrococcoides caseolyticum).